Consider the following 598-residue polypeptide: UvrABC system protein C (598 aa).

The GIY-YIG domain occupies 14 to 91 (DSPGCYLHKD…IQKNMPKYNI (78 aa)). Residues 196-231 (DKIIEDLRSKMLAASKEMAFERAAEYRDLISGIATM) form the UVR domain.

It belongs to the UvrC family. As to quaternary structure, interacts with UvrB in an incision complex.

It localises to the cytoplasm. In terms of biological role, the UvrABC repair system catalyzes the recognition and processing of DNA lesions. UvrC both incises the 5' and 3' sides of the lesion. The N-terminal half is responsible for the 3' incision and the C-terminal half is responsible for the 5' incision. This Streptococcus pyogenes serotype M1 protein is UvrABC system protein C.